Reading from the N-terminus, the 381-residue chain is L-lactate dehydrogenase (381 aa).

In terms of domain architecture, FMN hydroxy acid dehydrogenase spans 1-380 (MIISASTDYR…SADSLVRELG (380 aa)). Residue Y24 participates in substrate binding. FMN is bound by residues S106 and Q127. Y129 provides a ligand contact to substrate. An FMN-binding site is contributed by T155. R164 is a substrate binding site. K251 contacts FMN. H275 (proton acceptor) is an active-site residue. R278 serves as a coordination point for substrate. 306 to 330 (DSGIRTGLDVVRMIALGADSVLLGR) is an FMN binding site.

Belongs to the FMN-dependent alpha-hydroxy acid dehydrogenase family. As to quaternary structure, homotetramer. It depends on FMN as a cofactor.

It localises to the cell inner membrane. It catalyses the reaction (S)-lactate + A = pyruvate + AH2. Its function is as follows. Catalyzes the conversion of L-lactate to pyruvate. Is coupled to the respiratory chain. The sequence is that of L-lactate dehydrogenase from Pseudomonas aeruginosa (strain LESB58).